A 329-amino-acid chain; its full sequence is UPF0158 protein CT_429 (329 aa).

A disordered region spans residues 292-329; that stretch reads GYDSDGETGDFFDEEYDDEEEEIKPKKTTKRGRKKSRS. Acidic residues predominate over residues 295-313; that stretch reads SDGETGDFFDEEYDDEEEE. Basic residues predominate over residues 317 to 329; that stretch reads KKTTKRGRKKSRS.

Belongs to the UPF0158 family.

In Chlamydia trachomatis serovar D (strain ATCC VR-885 / DSM 19411 / UW-3/Cx), this protein is UPF0158 protein CT_429.